The chain runs to 400 residues: 3-phenylpropionate/cinnamic acid dioxygenase ferredoxin--NAD(+) reductase component (400 aa).

5-36 is an FAD binding site; sequence TIIIVGGGQAAAMAAASLRQQGFTGELHLFSD. 146-174 contacts NAD(+); it reads SVVIIGAGTIGLELAASATQRRCKVTVIE.

This sequence belongs to the bacterial ring-hydroxylating dioxygenase ferredoxin reductase family. As to quaternary structure, this dioxygenase system consists of four proteins: the two subunits of the hydroxylase component (HcaE and HcaF), a ferredoxin (HcaC) and a ferredoxin reductase (HcaD). It depends on FAD as a cofactor.

It carries out the reaction 2 reduced [2Fe-2S]-[ferredoxin] + NAD(+) + H(+) = 2 oxidized [2Fe-2S]-[ferredoxin] + NADH. It participates in aromatic compound metabolism; 3-phenylpropanoate degradation. Functionally, part of the multicomponent 3-phenylpropionate dioxygenase, that converts 3-phenylpropionic acid (PP) and cinnamic acid (CI) into 3-phenylpropionate-dihydrodiol (PP-dihydrodiol) and cinnamic acid-dihydrodiol (CI-dihydrodiol), respectively. In Escherichia coli (strain K12 / MC4100 / BW2952), this protein is 3-phenylpropionate/cinnamic acid dioxygenase ferredoxin--NAD(+) reductase component.